Here is a 360-residue protein sequence, read N- to C-terminus: 3-isopropylmalate dehydrogenase (360 aa).

76–89 contacts NAD(+); sequence GPKWDKIERDIRPE. 4 residues coordinate substrate: Arg-96, Arg-106, Arg-134, and Asp-224. Residues Asp-224, Asp-248, and Asp-252 each coordinate Mg(2+). 282–294 serves as a coordination point for NAD(+); it reads GSAPDIAGQGIAN.

This sequence belongs to the isocitrate and isopropylmalate dehydrogenases family. LeuB type 1 subfamily. As to quaternary structure, homodimer. Mg(2+) serves as cofactor. Mn(2+) is required as a cofactor.

The protein localises to the cytoplasm. It catalyses the reaction (2R,3S)-3-isopropylmalate + NAD(+) = 4-methyl-2-oxopentanoate + CO2 + NADH. The protein operates within amino-acid biosynthesis; L-leucine biosynthesis; L-leucine from 3-methyl-2-oxobutanoate: step 3/4. Its function is as follows. Catalyzes the oxidation of 3-carboxy-2-hydroxy-4-methylpentanoate (3-isopropylmalate) to 3-carboxy-4-methyl-2-oxopentanoate. The product decarboxylates to 4-methyl-2 oxopentanoate. The sequence is that of 3-isopropylmalate dehydrogenase from Pseudomonas fluorescens (strain ATCC BAA-477 / NRRL B-23932 / Pf-5).